Here is a 432-residue protein sequence, read N- to C-terminus: LYTYPENWRAFKALIAAQYSGAQVRVLSAPPHFHFGQTNHTPEFLRKFPAGKVPAFEGDDGFCVFESNAIAYYVSNEELRGSTPEAAAQVVQWVSFADSDIVPPASTWVFPTLGIMHYNKQATENAKDEVRRVLGLLDAHLKTRTFLVGERVTLADITVVCTLLWLYKQVLEPSFRQAFPNTNRWFLTCINQPQFRAVLGEVKLCEKMAQFDAKKFAESQPKKDTPRKEKGSREEKQKPQAERKEEKKAAAPAPEEELDECEQALAAEPKAKDPFAHLPKSTFVLDEFKRKYSNEDTLSVALPYFWEHFDKDGWSLWYSEYRFPEELTQTFMSCNLITGMFQRLDKLRKNAFASVILFGTNNSSSISGVWVFRGQELAFPLSPDWQVDYESYTWRKLDPGSEETQTLVREYFSWEGAYQHVGKAFNQGKIFK.

A GST N-terminal domain is found at 1-82; the sequence is LYTYPENWRA…YVSNEELRGS (82 aa). The GST C-terminal domain maps to 83 to 211; sequence TPEAAAQVVQ…VKLCEKMAQF (129 aa). Lys142 and Lys207 each carry N6-acetyllysine. Residues 216–249 are compositionally biased toward basic and acidic residues; it reads FAESQPKKDTPRKEKGSREEKQKPQAERKEEKKA. The tract at residues 216 to 258 is disordered; the sequence is FAESQPKKDTPRKEKGSREEKQKPQAERKEEKKAAAPAPEEEL. Lys248 participates in a covalent cross-link: Glycyl lysine isopeptide (Lys-Gly) (interchain with G-Cter in SUMO1). The region spanning 271–432 is the EF-1-gamma C-terminal domain; sequence AKDPFAHLPK…KAFNQGKIFK (162 aa). A Glycyl lysine isopeptide (Lys-Gly) (interchain with G-Cter in SUMO2) cross-link involves residue Lys280. Position 396 is an N6-acetyllysine (Lys396). Lys429 bears the N6-acetyllysine; alternate mark. An N6-malonyllysine; alternate modification is found at Lys429.

In terms of assembly, EF-1 is composed of four subunits: alpha, beta, delta, and gamma.

Its function is as follows. Probably plays a role in anchoring the complex to other cellular components. This is Elongation factor 1-gamma (EEF1G) from Sus scrofa (Pig).